The following is a 491-amino-acid chain: MNASLRRISVTVMALIVLLLLNATMTQVFTADGLRADPRNQRVLLDEYSRQRGQITAGGQLLAYSVATDGRFRFLRVYPNPEVYAPVTGFYSLRYSSTALERAEDPILNGSDRRLFGRRLADFFTGRDPRGGNVDTTINPRIQQAGWDAMQQGCYGPCKGAVVALEPSTGKILALVSSPSYDPNLLASHNPEVQAQAWQRLGDNPASPLTNRAISETYPPGSTFKVITTAAALAAGATETEQLTAAPTIPLPGSTAQLENYGGAPCGDEPTVSLREAFVKSCNTAFVQLGIRTGADALRSMARAFGLDSPPRPTPLQVAESTVGPIPDSAALGMTSIGQKDVALTPLANAEIAATIANGGITMRPYLVGSLKGPDLANISTTVGYQQRRAVSPQVAAKLTELMVGAEKVAQQKGAIPGVQIASKTGTAEHGTDPRHTPPHAWYIAFAPAQAPKVAVAVLVENGADRLSATGGALAAPIGRAVIEAALQGEP.

The Cytoplasmic segment spans residues 1–7 (MNASLRR). A helical; Signal-anchor for type II membrane protein membrane pass occupies residues 8 to 28 (ISVTVMALIVLLLLNATMTQV). At 29-491 (FTADGLRADP…VIEAALQGEP (463 aa)) the chain is on the periplasmic side. Residues 160–484 (GAVVALEPST…AAPIGRAVIE (325 aa)) form a transpeptidase region. The Acyl-ester intermediate role is filled by Ser-222.

The protein belongs to the transpeptidase family.

Its subcellular location is the cell inner membrane. It carries out the reaction Preferential cleavage: (Ac)2-L-Lys-D-Ala-|-D-Ala. Also transpeptidation of peptidyl-alanyl moieties that are N-acyl substituents of D-alanine.. It functions in the pathway cell wall biogenesis; peptidoglycan biosynthesis. Functionally, transpeptidase that catalyzes cross-linking of the peptidoglycan cell wall. Required for the regulation of cell length. The polypeptide is Peptidoglycan D,D-transpeptidase PbpA (pbpA) (Mycobacterium tuberculosis (strain CDC 1551 / Oshkosh)).